Consider the following 648-residue polypeptide: Bifunctional lysine-specific demethylase and histidyl-hydroxylase NO66 (648 aa).

A disordered region spans residues 1 to 168 (MSKVSSIFDT…KGAKAAKKNK (168 aa)). Residues 17 to 28 (PATTENGAAAKP) are compositionally biased toward low complexity. Residues 109–119 (DHRKHKEKLRK) show a composition bias toward basic residues. Polar residues predominate over residues 123-137 (GVENSRQAAASTSML). Residues 155–168 (PVHHKGAKAAKKNK) show a composition bias toward basic residues. Residues 308-453 (CSIRMLNPQT…DLLELYLPHA (146 aa)) form the JmjC domain. Fe cation is bound by residues His354, Asp356, and His419.

Belongs to the ROX family. NO66 subfamily. Requires Fe(2+) as cofactor.

Its subcellular location is the nucleus. The catalysed reaction is N(6),N(6)-dimethyl-L-lysyl(36)-[histone H3] + 2 2-oxoglutarate + 2 O2 = L-lysyl(36)-[histone H3] + 2 formaldehyde + 2 succinate + 2 CO2. Oxygenase that can act as both a histone lysine demethylase and a ribosomal histidine hydroxylase. Specifically demethylates 'Lys-4' (H3K4me) and 'Lys-36' (H3K36me) of histone H3, thereby playing a central role in histone code. This is Bifunctional lysine-specific demethylase and histidyl-hydroxylase NO66 from Culex quinquefasciatus (Southern house mosquito).